The chain runs to 201 residues: LexA repressor (201 aa).

Positions methionine 28–threonine 48 form a DNA-binding region, H-T-H motif. Active-site for autocatalytic cleavage activity residues include serine 120 and lysine 157.

It belongs to the peptidase S24 family. As to quaternary structure, homodimer.

It carries out the reaction Hydrolysis of Ala-|-Gly bond in repressor LexA.. In terms of biological role, represses a number of genes involved in the response to DNA damage (SOS response), including recA and lexA. In the presence of single-stranded DNA, RecA interacts with LexA causing an autocatalytic cleavage which disrupts the DNA-binding part of LexA, leading to derepression of the SOS regulon and eventually DNA repair. The sequence is that of LexA repressor from Geobacter metallireducens (strain ATCC 53774 / DSM 7210 / GS-15).